Consider the following 392-residue polypeptide: 23S rRNA (uracil(747)-C(5))-methyltransferase RlmC (392 aa).

Residues Cys-4, Cys-12, Cys-15, and Cys-93 each coordinate [4Fe-4S] cluster. Gln-218, Phe-247, Glu-275, and Asn-321 together coordinate S-adenosyl-L-methionine. Cys-348 functions as the Nucleophile in the catalytic mechanism.

It belongs to the class I-like SAM-binding methyltransferase superfamily. RNA M5U methyltransferase family. RlmC subfamily.

It catalyses the reaction uridine(747) in 23S rRNA + S-adenosyl-L-methionine = 5-methyluridine(747) in 23S rRNA + S-adenosyl-L-homocysteine + H(+). Functionally, catalyzes the formation of 5-methyl-uridine at position 747 (m5U747) in 23S rRNA. The polypeptide is 23S rRNA (uracil(747)-C(5))-methyltransferase RlmC (Haemophilus influenzae (strain PittGG)).